We begin with the raw amino-acid sequence, 171 residues long: Adenine phosphoribosyltransferase (171 aa).

Belongs to the purine/pyrimidine phosphoribosyltransferase family. As to quaternary structure, homodimer.

Its subcellular location is the cytoplasm. It catalyses the reaction AMP + diphosphate = 5-phospho-alpha-D-ribose 1-diphosphate + adenine. The protein operates within purine metabolism; AMP biosynthesis via salvage pathway; AMP from adenine: step 1/1. In terms of biological role, catalyzes a salvage reaction resulting in the formation of AMP, that is energically less costly than de novo synthesis. The sequence is that of Adenine phosphoribosyltransferase from Mycoplasmopsis fermentans (strain ATCC 19989 / NBRC 14854 / NCTC 10117 / PG18) (Mycoplasma fermentans).